A 363-amino-acid polypeptide reads, in one-letter code: Ethanol acetyltransferase 1 (363 aa).

The transit peptide at 1–19 (MLLAYTVRPSNWSFTRRAY) directs the protein to the mitochondrion. In terms of domain architecture, AB hydrolase-1 spans 65–164 (PIIFYHGLLG…FSAACIIDNS (100 aa)). Active-site charge relay system residues include Ser-138, Asp-162, and His-313.

It belongs to the AB hydrolase superfamily.

The protein resides in the mitochondrion. The enzyme catalyses ethanol + acetyl-CoA = ethyl acetate + CoA. It carries out the reaction acetyl-CoA + H2O = acetate + CoA + H(+). The catalysed reaction is ethyl acetate + H2O = ethanol + acetate + H(+). Its function is as follows. Alcohol acetyltransferase that catalyzes the synthesis of ethyl acetate from ethanol and acetyl-CoA. Can also function as a thioesterase by hydrolyzing acetyl-CoA in the absence of ethanol, as well as esterase hydrolyzing ethyl acetate. This is Ethanol acetyltransferase 1 (EAT1) from Kluyveromyces marxianus (strain DMKU3-1042 / BCC 29191 / NBRC 104275) (Yeast).